Here is a 78-residue protein sequence, read N- to C-terminus: Esculentin-2ISa (78 aa).

The N-terminal stretch at 1–22 (MFTLKKSLLLLFFLGTISLSVC) is a signal peptide. Positions 23–39 (KQERDADYEDKGEVEEV) are cleaved as a propeptide — removed in mature form. A disulfide bridge links Cys72 with Cys78.

Expressed by the skin glands.

It is found in the secreted. Its function is as follows. Has antimicrobial activity against Gram-negative bacterium E.coli ATCC 8739 (MIC=12.5 ug), against Gram positive bacteria S.aureus ATCC 6538 (MIC=3.1 ug), methicillin-resistant S.aureus ATCC 43300 (MIC=25 ug), B.subtilis ATCC 6633 (MIC=6.3 ug) and against fungus C.albicans ATCC 90028 (MIC=100 ug). The polypeptide is Esculentin-2ISa (Odorrana ishikawae (Ishikawa's frog)).